A 1027-amino-acid polypeptide reads, in one-letter code: Protein translocase subunit SecA (1027 aa).

ATP is bound by residues Q143, 161 to 165 (GEGKT), and D661. Positions 981-1027 (EESGTSNADNAGDNGPQTVIAEKKPGRNDLCPCGSGKKYKNCHGQQP) are disordered. Residues C1011, C1013, C1022, and H1023 each coordinate Zn(2+).

The protein belongs to the SecA family. Monomer and homodimer. Part of the essential Sec protein translocation apparatus which comprises SecA, SecYEG and auxiliary proteins SecDF. Other proteins may also be involved. Zn(2+) serves as cofactor.

Its subcellular location is the cell inner membrane. It is found in the cytoplasm. It catalyses the reaction ATP + H2O + cellular proteinSide 1 = ADP + phosphate + cellular proteinSide 2.. Part of the Sec protein translocase complex. Interacts with the SecYEG preprotein conducting channel. Has a central role in coupling the hydrolysis of ATP to the transfer of proteins into and across the cell membrane, serving as an ATP-driven molecular motor driving the stepwise translocation of polypeptide chains across the membrane. This Chlorobium limicola (strain DSM 245 / NBRC 103803 / 6330) protein is Protein translocase subunit SecA.